Consider the following 362-residue polypeptide: S-adenosylmethionine:tRNA ribosyltransferase-isomerase (362 aa).

It belongs to the QueA family. In terms of assembly, monomer.

The protein localises to the cytoplasm. The catalysed reaction is 7-aminomethyl-7-carbaguanosine(34) in tRNA + S-adenosyl-L-methionine = epoxyqueuosine(34) in tRNA + adenine + L-methionine + 2 H(+). It functions in the pathway tRNA modification; tRNA-queuosine biosynthesis. Its function is as follows. Transfers and isomerizes the ribose moiety from AdoMet to the 7-aminomethyl group of 7-deazaguanine (preQ1-tRNA) to give epoxyqueuosine (oQ-tRNA). This is S-adenosylmethionine:tRNA ribosyltransferase-isomerase from Yersinia enterocolitica serotype O:8 / biotype 1B (strain NCTC 13174 / 8081).